A 213-amino-acid chain; its full sequence is Uracil phosphoribosyltransferase (213 aa).

5-phospho-alpha-D-ribose 1-diphosphate is bound by residues R78, R103, and 131-139; that span reads DPMLATGGT. Residues I197 and 202–204 each bind uracil; that span reads GDA. Residue D203 participates in 5-phospho-alpha-D-ribose 1-diphosphate binding.

This sequence belongs to the UPRTase family. It depends on Mg(2+) as a cofactor.

The catalysed reaction is UMP + diphosphate = 5-phospho-alpha-D-ribose 1-diphosphate + uracil. It participates in pyrimidine metabolism; UMP biosynthesis via salvage pathway; UMP from uracil: step 1/1. Its activity is regulated as follows. Allosterically activated by GTP. Its function is as follows. Catalyzes the conversion of uracil and 5-phospho-alpha-D-ribose 1-diphosphate (PRPP) to UMP and diphosphate. The protein is Uracil phosphoribosyltransferase of Bifidobacterium longum subsp. infantis (strain ATCC 15697 / DSM 20088 / JCM 1222 / NCTC 11817 / S12).